The primary structure comprises 185 residues: Elongation factor P (185 aa).

It belongs to the elongation factor P family.

It localises to the cytoplasm. Its pathway is protein biosynthesis; polypeptide chain elongation. Its function is as follows. Involved in peptide bond synthesis. Stimulates efficient translation and peptide-bond synthesis on native or reconstituted 70S ribosomes in vitro. Probably functions indirectly by altering the affinity of the ribosome for aminoacyl-tRNA, thus increasing their reactivity as acceptors for peptidyl transferase. The sequence is that of Elongation factor P from Endomicrobium trichonymphae.